We begin with the raw amino-acid sequence, 353 residues long: Quinolinate synthase (353 aa).

Iminosuccinate-binding residues include His-47 and Ser-68. Cys-113 lines the [4Fe-4S] cluster pocket. Residues 139-141 (YAN) and Ser-156 contribute to the iminosuccinate site. Cys-200 is a [4Fe-4S] cluster binding site. Iminosuccinate is bound by residues 226 to 228 (HPE) and Thr-243. Residue Cys-297 coordinates [4Fe-4S] cluster.

It belongs to the quinolinate synthase family. Type 1 subfamily. [4Fe-4S] cluster is required as a cofactor.

Its subcellular location is the cytoplasm. The catalysed reaction is iminosuccinate + dihydroxyacetone phosphate = quinolinate + phosphate + 2 H2O + H(+). Its pathway is cofactor biosynthesis; NAD(+) biosynthesis; quinolinate from iminoaspartate: step 1/1. Catalyzes the condensation of iminoaspartate with dihydroxyacetone phosphate to form quinolinate. This chain is Quinolinate synthase, found in Yersinia pestis bv. Antiqua (strain Antiqua).